Reading from the N-terminus, the 205-residue chain is High frequency lysogenization protein HflD homolog (205 aa).

It belongs to the HflD family.

Its subcellular location is the cytoplasm. It is found in the cell inner membrane. In Shewanella piezotolerans (strain WP3 / JCM 13877), this protein is High frequency lysogenization protein HflD homolog.